Reading from the N-terminus, the 216-residue chain is Large ribosomal subunit protein uL1 (216 aa).

This sequence belongs to the universal ribosomal protein uL1 family. Component of the large ribosomal subunit.

Its subcellular location is the cytoplasm. In terms of biological role, component of the large ribosomal subunit. The ribosome is a large ribonucleoprotein complex responsible for the synthesis of proteins in the cell. In Ictalurus punctatus (Channel catfish), this protein is Large ribosomal subunit protein uL1 (rpl10a).